The following is a 229-amino-acid chain: ATP synthase subunit a 3 (229 aa).

6 helical membrane passes run 25–45 (ADAVSYTWLIIALLLLLSFLA), 86–106 (VATIGIFVLVSNLIGLIPGFF), 111–131 (NINTTAACAIVVFLSTHVVGI), 142–162 (FCGPILWLTPIMFFIEVIGHL), 181–201 (LVLIIFFGLAPFLVPLPMMLM), and 202–222 (GVLVSFIQAFVFMLLTMIYIQ).

Belongs to the ATPase A chain family. In terms of assembly, F-type ATPases have 2 components, CF(1) - the catalytic core - and CF(0) - the membrane proton channel. CF(1) has five subunits: alpha(3), beta(3), gamma(1), delta(1), epsilon(1). CF(0) has three main subunits: a(1), b(2) and c(9-12). The alpha and beta chains form an alternating ring which encloses part of the gamma chain. CF(1) is attached to CF(0) by a central stalk formed by the gamma and epsilon chains, while a peripheral stalk is formed by the delta and b chains.

The protein resides in the cell inner membrane. Functionally, key component of the proton channel; it plays a direct role in the translocation of protons across the membrane. This is ATP synthase subunit a 3 from Pelobacter propionicus (strain DSM 2379 / NBRC 103807 / OttBd1).